The sequence spans 404 residues: G1/S-specific cyclin-E2 (404 aa).

Positions 1–41 (MSRRSSRLQAKQHAQPNQPDSPQETQIIQAKKRKTAQDVKK) are disordered. A compositionally biased stretch (polar residues) spans 7-28 (RLQAKQHAQPNQPDSPQETQII). Ser-21 is modified (phosphoserine). Lys-348 is subject to N6-lactoyllysine. Ser-383 is modified (phosphoserine). Thr-392 carries the post-translational modification Phosphothreonine.

This sequence belongs to the cyclin family. Cyclin E subfamily. Interacts with the CDK2 (in vivo) and CDK3 (in vitro) protein kinases to form a serine/threonine kinase holoenzyme complex. The cyclin subunit imparts substrate specificity to the complex. Post-translationally, phosphorylation by CDK2 triggers its release from CDK2 and degradation via the ubiquitin proteasome pathway. Lactylated at Lys-348. Delactylated by SIRT3. In terms of tissue distribution, highest levels in adult testis, thymus and brain. Lower levels in placenta, spleen and colon.

It is found in the nucleus. Its function is as follows. Essential for the control of the cell cycle at the late G1 and early S phase. This Mus musculus (Mouse) protein is G1/S-specific cyclin-E2 (Ccne2).